The primary structure comprises 379 residues: Alanine racemase (379 aa).

K41 acts as the Proton acceptor; specific for D-alanine in catalysis. N6-(pyridoxal phosphate)lysine is present on K41. Position 138 (R138) interacts with substrate. Y260 acts as the Proton acceptor; specific for L-alanine in catalysis. M319 is a binding site for substrate.

It belongs to the alanine racemase family. Pyridoxal 5'-phosphate serves as cofactor.

It catalyses the reaction L-alanine = D-alanine. It participates in amino-acid biosynthesis; D-alanine biosynthesis; D-alanine from L-alanine: step 1/1. Catalyzes the interconversion of L-alanine and D-alanine. May also act on other amino acids. This Rhizobium meliloti (strain 1021) (Ensifer meliloti) protein is Alanine racemase (alr).